A 61-amino-acid polypeptide reads, in one-letter code: Small ribosomal subunit protein uS14B (61 aa).

Residues C24, C27, C40, and C43 each coordinate Zn(2+).

This sequence belongs to the universal ribosomal protein uS14 family. Zinc-binding uS14 subfamily. In terms of assembly, part of the 30S ribosomal subunit. Contacts proteins S3 and S10. Zn(2+) is required as a cofactor.

Functionally, binds 16S rRNA, required for the assembly of 30S particles and may also be responsible for determining the conformation of the 16S rRNA at the A site. In Streptomyces avermitilis (strain ATCC 31267 / DSM 46492 / JCM 5070 / NBRC 14893 / NCIMB 12804 / NRRL 8165 / MA-4680), this protein is Small ribosomal subunit protein uS14B.